A 3432-amino-acid chain; its full sequence is Genome polyprotein (3432 aa).

The segment at 2 to 15 (TKKPGGPGKNRAIN) is interaction with host EXOC1. Residues 2 to 109 (TKKPGGPGKN…RKQNKRGGNE (108 aa)) lie on the Cytoplasmic side of the membrane. The hydrophobic; homodimerization of capsid protein C stretch occupies residues 37–72 (LLDGRGPVRFVLALITFFKFTALAPTKALLGRWKAV). A propeptide spans 106-127 (GGNEGSIMWLASLAVVIACAGA) (ER anchor for the capsid protein C, removed in mature form by serine protease NS3). The helical transmembrane segment at 110–130 (GSIMWLASLAVVIACAGAMKL) threads the bilayer. Residues 131–253 (SNFQGKLLMT…ATRYLMKTEN (123 aa)) lie on the Extracellular side of the membrane. Asn-142 is a glycosylation site (N-linked (GlcNAc...) asparagine; by host). Residues 254–274 (WIIRNPGYAFLAAVLGWMLGS) traverse the membrane as a helical segment. Topologically, residues 275-279 (NNGQR) are cytoplasmic. A helical membrane pass occupies residues 280–294 (VVFTILLLLVAPAYS). Over 295-746 (FNCLGMGNRD…QVFGGAFRTL (452 aa)) the chain is Extracellular. Intrachain disulfides connect Cys-297–Cys-324, Cys-354–Cys-410, Cys-354–Cys-415, Cys-368–Cys-399, Cys-386–Cys-410, and Cys-386–Cys-415. Positions 392–405 (DRGWGNGCGLFGKG) are fusion peptide. Asn-448 is a glycosylation site (N-linked (GlcNAc...) asparagine; by host). 2 cysteine pairs are disulfide-bonded: Cys-484–Cys-581 and Cys-598–Cys-629. The chain crosses the membrane as a helical span at residues 747–767 (FGGMSWITQGLMGALLLWMGV). At 768 to 773 (NARDRS) the chain is on the cytoplasmic side. A helical membrane pass occupies residues 774-794 (IALAFLATGGVLVFLATNVHA). At 795 to 1219 (DTGCAIDITR…AFAEANSGGD (425 aa)) the chain is on the extracellular side. Intrachain disulfides connect Cys-798–Cys-809, Cys-849–Cys-937, Cys-973–Cys-1017, Cys-1074–Cys-1123, Cys-1085–Cys-1106, and Cys-1107–Cys-1110. Asn-924 and Asn-1001 each carry an N-linked (GlcNAc...) asparagine; by host glycan. Residues 1220 to 1240 (VLHLALIAVFKIQPAFLVMNM) traverse the membrane as a helical segment. The Cytoplasmic segment spans residues 1241–1250 (LSTRWTNQEN). A helical membrane pass occupies residues 1251–1271 (VILVLGAAFFQLASVDLQIGV). His-1272 is a topological domain (lumenal). A helical transmembrane segment spans residues 1273-1293 (GILNAAAIAWMIVRAITFPTT). At 1294–1309 (SSVTMPVLALLTPGMR) the chain is on the cytoplasmic side. A helical transmembrane segment spans residues 1310–1330 (ALYLDTYRIILLVIGICSLLH). Residues 1331–1341 (ERKKTMAKKKG) lie on the Lumenal side of the membrane. The chain crosses the membrane as a helical span at residues 1342 to 1362 (AVLLGLALTSTGWFSPTTIAA). Residues 1363-1374 (GLMVCNPNKKRG) lie on the Cytoplasmic side of the membrane. 2 interaction with human SPCS1 regions span residues 1374 to 1423 (GWPA…GKAT) and 1458 to 1505 (FHLI…TKRG). Residues 1375–1395 (WPATEFLSAVGLMFAIVGGLA) traverse the membrane as a helical segment. The Lumenal segment spans residues 1396–1398 (ELD). Residues 1399-1419 (IESMSIPFMLAGLMAVSYVVS) traverse the membrane as a helical segment. Over 1420 to 1476 (GKATDMWLERAADISWEMDAAITGSSRRLDVKLDDDGDFHLIDDPGVPWKVWVLRMS) the chain is Cytoplasmic. The interacts with and activates NS3 protease stretch occupies residues 1427–1466 (LERAADISWEMDAAITGSSRRLDVKLDDDGDFHLIDDPGV). The helical intramembrane region spans 1477-1497 (CIGLAALTPWAIVPAAFGYWL). Residues 1498–2173 (TLKTTKRGGV…RMALEELPDA (676 aa)) lie on the Cytoplasmic side of the membrane. The region spanning 1505–1682 (GGVFWDTPSP…DRQEEPVPEA (178 aa)) is the Peptidase S7 domain. Residues His-1555, Asp-1579, and Ser-1639 each act as charge relay system; for serine protease NS3 activity in the active site. The Helicase ATP-binding domain occupies 1685-1841 (PNMLRKRQMT…DSNAPIHDLQ (157 aa)). Residues 1689-1692 (RKRQ) form an important for RNA-binding region. ATP is bound at residue 1698–1705 (LHPGSGKT). The DEAH box signature appears at 1789-1792 (DEAH). Residues 1852–2017 (GYEWITEYAG…GLVAQLYGPE (166 aa)) enclose the Helicase C-terminal domain. Position 1893 is an N6-acetyllysine; by host (Lys-1893). The interval 1950–1972 (NPSPITSASAAQRRGRVGRNPNQ) is disordered. The regulates the ATPase activity of NS3 helicase stretch occupies residues 2168–2172 (EELPD). The helical transmembrane segment at 2174-2194 (LETITLIVAITVMTGGFFLLM) threads the bilayer. At 2195-2199 (MQRKG) the chain is on the lumenal side. The helical intramembrane region spans 2200-2220 (IGKMGLGALVLTLATFFLWAA). A topological domain (lumenal) is located at residue Glu-2221. The helical transmembrane segment at 2222-2242 (VPGTKIAGTLLIALLLMVVLI) threads the bilayer. Residues 2243–2257 (PEPEKQRSQTDNQLA) are Cytoplasmic-facing. Residues 2258 to 2278 (VFLICVLTVVGVVAANEYGML) form a helical membrane-spanning segment. The Lumenal segment spans residues 2279-2311 (EKTKADLKSMFGGKTQASGLTGLPSMALDLRPA). Positions 2312–2332 (TAWALYGGSTVVLTPLLKHLI) form an intramembrane region, helical. At 2333–2368 (TSEYVTTSLASINSQAGSLFVLPRGVPFTDLDLTVG) the chain is on the lumenal side. A helical membrane pass occupies residues 2369–2389 (LVFLGCWGQITLTTFLTAMVL). At 2390–2444 (ATLHYGYMLPGWQAEALRAAQRRTAAGIMKNAVVDGMVATDVPELERTTPLMQKK) the chain is on the cytoplasmic side. Residues 2445-2465 (VGQVLLIGVSVAAFLVNPNVT) form a helical membrane-spanning segment. Topologically, residues 2466-2469 (TVRE) are lumenal. Residues 2470–2490 (AGVLVTAATLTLWDNGASAVW) form a helical membrane-spanning segment. Residues 2491–3432 (NSTTATGLCH…DVLIQEDRVI (942 aa)) are Cytoplasmic-facing. The mRNA cap 0-1 NS5-type MT domain maps to 2528-2793 (GRPGGRTLGE…DVNLGSGTRA (266 aa)). Residue Ser-2583 participates in S-adenosyl-L-methionine binding. Ser-2583 bears the Phosphoserine mark. Lys-2588 (for 2'-O-MTase activity) is an active-site residue. Residues Gly-2613, Trp-2614, Thr-2631, Lys-2632, Asp-2658, and Val-2659 each coordinate S-adenosyl-L-methionine. Asp-2673 (for 2'-O-MTase activity) is an active-site residue. Residue Ile-2674 coordinates S-adenosyl-L-methionine. Residues Lys-2709 and Glu-2745 each act as for 2'-O-MTase activity in the active site. Residue Tyr-2747 participates in S-adenosyl-L-methionine binding. Zn(2+)-binding residues include Glu-2967, His-2971, Cys-2976, and Cys-2979. The RdRp catalytic domain occupies 3057–3209 (GKMYADDTAG…KPLDDRFATA (153 aa)). The Zn(2+) site is built by His-3244, Cys-3260, and Cys-3379.

It in the N-terminal section; belongs to the class I-like SAM-binding methyltransferase superfamily. mRNA cap 0-1 NS5-type methyltransferase family. In terms of assembly, homodimer. Interacts (via N-terminus) with host EXOC1 (via C-terminus); this interaction results in EXOC1 degradation through the proteasome degradation pathway. As to quaternary structure, forms heterodimers with envelope protein E in the endoplasmic reticulum and Golgi. Homodimer; in the endoplasmic reticulum and Golgi. Interacts with protein prM. Interacts with non-structural protein 1. Interacts with host HSPA5. In terms of assembly, homodimer; Homohexamer when secreted. Interacts with envelope protein E. NS1 interacts with NS4B. Interacts with host complement protein CFH; this interaction leads to the degradation of C3. As to quaternary structure, interacts (via N-terminus) with serine protease NS3. Forms a heterodimer with serine protease NS3. May form homooligomers. Interacts with human SPCS1. In terms of assembly, forms a heterodimer with NS2B. Interacts with non-structural protein 2A (via N-terminus). Interacts with NS4B. Interacts with unphosphorylated RNA-directed RNA polymerase NS5; this interaction stimulates RNA-directed RNA polymerase NS5 guanylyltransferase activity. Interacts with host ILF2. As to quaternary structure, interacts with serine protease NS3. Homodimer. Interacts with host STAT2; this interaction inhibits the phosphorylation of the latter, and, when all viral proteins are present (polyprotein), targets STAT2 for degradation. Interacts with serine protease NS3. The cofactor is Mn(2+). Mg(2+) serves as cofactor. In terms of processing, specific enzymatic cleavages in vivo yield mature proteins. Cleavages in the lumen of endoplasmic reticulum are performed by host signal peptidase, whereas cleavages in the cytoplasmic side are performed by serine protease NS3. Signal cleavage at the 2K-4B site requires a prior NS3 protease-mediated cleavage at the 4A-2K site. Cleaved in post-Golgi vesicles by a host furin, releasing the mature small envelope protein M, and peptide pr. This cleavage is incomplete as up to 30% of viral particles still carry uncleaved prM. Post-translationally, N-glycosylated. In terms of processing, N-glycosylated. The excreted form is glycosylated and this is required for efficient secretion of the protein from infected cells. Acetylated by host KAT5. Acetylation modulates NS3 RNA-binding and unwinding activities and plays an important positive role for viral replication. Post-translationally, phosphorylated on serines residues. This phosphorylation may trigger NS5 nuclear localization.

It is found in the host endoplasmic reticulum membrane. The protein localises to the virion. It localises to the host nucleus. The protein resides in the host cytoplasm. Its subcellular location is the host perinuclear region. It is found in the secreted. The protein localises to the virion membrane. It localises to the host cell surface. It catalyses the reaction Selective hydrolysis of -Xaa-Xaa-|-Yaa- bonds in which each of the Xaa can be either Arg or Lys and Yaa can be either Ser or Ala.. It carries out the reaction RNA(n) + a ribonucleoside 5'-triphosphate = RNA(n+1) + diphosphate. The enzyme catalyses a ribonucleoside 5'-triphosphate + H2O = a ribonucleoside 5'-diphosphate + phosphate + H(+). The catalysed reaction is ATP + H2O = ADP + phosphate + H(+). It catalyses the reaction a 5'-end (5'-triphosphoguanosine)-ribonucleoside in mRNA + S-adenosyl-L-methionine = a 5'-end (N(7)-methyl 5'-triphosphoguanosine)-ribonucleoside in mRNA + S-adenosyl-L-homocysteine. It carries out the reaction a 5'-end (N(7)-methyl 5'-triphosphoguanosine)-ribonucleoside in mRNA + S-adenosyl-L-methionine = a 5'-end (N(7)-methyl 5'-triphosphoguanosine)-(2'-O-methyl-ribonucleoside) in mRNA + S-adenosyl-L-homocysteine + H(+). Plays a role in virus budding by binding to the cell membrane and gathering the viral RNA into a nucleocapsid that forms the core of a mature virus particle. During virus entry, may induce genome penetration into the host cytoplasm after hemifusion induced by the surface proteins. Can migrate to the cell nucleus where it modulates host functions. Overcomes the anti-viral effects of host EXOC1 by sequestering and degrading the latter through the proteasome degradation pathway. Its function is as follows. Inhibits RNA silencing by interfering with host Dicer. Functionally, prevents premature fusion activity of envelope proteins in trans-Golgi by binding to envelope protein E at pH 6.0. After virion release in extracellular space, gets dissociated from E dimers. In terms of biological role, acts as a chaperone for envelope protein E during intracellular virion assembly by masking and inactivating envelope protein E fusion peptide. prM is the only viral peptide matured by host furin in the trans-Golgi network probably to avoid catastrophic activation of the viral fusion activity in acidic Golgi compartment prior to virion release. prM-E cleavage is inefficient, and many virions are only partially matured. These uncleaved prM would play a role in immune evasion. May play a role in virus budding. Exerts cytotoxic effects by activating a mitochondrial apoptotic pathway through M ectodomain. May display a viroporin activity. Its function is as follows. Binds to host cell surface receptor and mediates fusion between viral and cellular membranes. Efficient virus attachment to cell is, at least in part, mediated by host HSPA5. Envelope protein is synthesized in the endoplasmic reticulum in the form of heterodimer with protein prM. They play a role in virion budding in the ER, and the newly formed immature particle is covered with 60 spikes composed of heterodimer between precursor prM and envelope protein E. The virion is transported to the Golgi apparatus where the low pH causes dissociation of PrM-E heterodimers and formation of E homodimers. prM-E cleavage is inefficient, and many virions are only partially matured. These uncleaved prM would play a role in immune evasion. Functionally, involved in immune evasion, pathogenesis and viral replication. Once cleaved off the polyprotein, is targeted to three destinations: the viral replication cycle, the plasma membrane and the extracellular compartment. Essential for viral replication. Required for formation of the replication complex and recruitment of other non-structural proteins to the ER-derived membrane structures. Excreted as a hexameric lipoparticle that plays a role against host immune response. Antagonizing the complement function. Binds to the host macrophages and dendritic cells. Inhibits signal transduction originating from Toll-like receptor 3 (TLR3). In terms of biological role, component of the viral RNA replication complex that functions in virion assembly and antagonizes the host alpha/beta interferon antiviral response. Required cofactor for the serine protease function of NS3. May have membrane-destabilizing activity and form viroporins. Its function is as follows. Displays three enzymatic activities: serine protease, NTPase and RNA helicase. NS3 serine protease, in association with NS2B, performs its autocleavage and cleaves the polyprotein at dibasic sites in the cytoplasm: C-prM, NS2A-NS2B, NS2B-NS3, NS3-NS4A, NS4A-2K and NS4B-NS5. NS3 RNA helicase binds RNA and unwinds dsRNA in the 3' to 5' direction. Functionally, regulates the ATPase activity of the NS3 helicase activity. NS4A allows NS3 helicase to conserve energy during unwinding. In terms of biological role, functions as a signal peptide for NS4B and is required for the interferon antagonism activity of the latter. Induces the formation of ER-derived membrane vesicles where the viral replication takes place. Inhibits interferon (IFN)-induced host STAT1 phosphorylation and nuclear translocation, thereby preventing the establishment of cellular antiviral state by blocking the IFN-alpha/beta pathway. Inhibits STAT2 translocation in the nucleus after IFN-alpha treatment. Its function is as follows. Replicates the viral (+) and (-) RNA genome. Performs the capping of genomes in the cytoplasm. NS5 methylates viral RNA cap at guanine N-7 and ribose 2'-O positions. Besides its role in RNA genome replication, also prevents the establishment of cellular antiviral state by blocking the interferon-alpha/beta (IFN-alpha/beta) signaling pathway. Inhibits host TYK2 and STAT2 phosphorylation, thereby preventing activation of JAK-STAT signaling pathway. This chain is Genome polyprotein, found in Japanese encephalitis virus (strain SA-14) (JEV).